A 477-amino-acid chain; its full sequence is PTS system glucose-specific EIICB component (477 aa).

A PTS EIIC type-1 domain is found at 1–388 (MFKNVFANLQ…FNLDTPGREN (388 aa)). The next 10 membrane-spanning stretches (helical) occupy residues 15–35 (SLML…IGSA), 51–71 (TGGS…ALGF), 76–96 (GVAA…LTAV), 112–132 (HLSD…AYMF), 152–172 (FVPI…SLIW), 191–211 (PILA…FGLH), 250–270 (LSGG…AIWH), 280–300 (IGSI…TEPI), 304–324 (FIIV…LSFP), and 357–377 (FPII…LFII). Residues 399–477 (NEIAPYIITA…TAMDECIKNI (79 aa)) enclose the PTS EIIB type-1 domain. The active-site Phosphocysteine intermediate; for EIIB activity is the cysteine 421. Cysteine 421 carries the post-translational modification Phosphocysteine.

It localises to the cell inner membrane. It carries out the reaction N(pros)-phospho-L-histidyl-[protein] + D-glucose(out) = D-glucose 6-phosphate(in) + L-histidyl-[protein]. In terms of biological role, the phosphoenolpyruvate-dependent sugar phosphotransferase system (sugar PTS), a major carbohydrate active transport system, catalyzes the phosphorylation of incoming sugar substrates concomitantly with their translocation across the cell membrane. The enzyme II complex composed of PtsG and Crr is involved in glucose transport. The sequence is that of PTS system glucose-specific EIICB component (ptsG) from Buchnera aphidicola subsp. Acyrthosiphon pisum (strain APS) (Acyrthosiphon pisum symbiotic bacterium).